Reading from the N-terminus, the 457-residue chain is Putative ankyrin repeat protein L112 (457 aa).

ANK repeat units lie at residues 62–91 (QRITLINYVVEKGYLDIIVYINNLKSNHNP), 104–132 (SKDTALWYSCKNNNLATTKYFINKGASIN), 133–162 (SSSLPLKTACIEGHLDTVKYLFSCGIEIIN), 193–219 (YINEAFVMACKYGYLDIAKYLFNLDCS), 220–249 (ITVDALYGACINGHIEVVEYLIGLGVDPRK), 251–279 (KCWAITSACQGGHLNIIEFLLSLGIKPKE), 281–309 (NVDAFYHACKTGNLEIAKYLKEIGADTIT), 310–339 (RRDWALELSARGGYLDVVKYIIELGVSQKS), 341–368 (NKALIDATLFCRVEVVEYLVDSGSDFRQ), 400–429 (NNNEPIKTVCHNGCIGILKLLIMYGVDYNP), and 431–457 (KDQLINIAKSNNQSAIIKYLEDLDTLK).

The chain is Putative ankyrin repeat protein L112 from Acanthamoeba polyphaga mimivirus (APMV).